We begin with the raw amino-acid sequence, 541 residues long: Atrial natriuretic peptide receptor 3 (541 aa).

The signal sequence occupies residues 1 to 26 (MPSLLVLTFSPCVLLGWALLAGGTGG). Residues 27-481 (GGVGGGGGGA…PCKSSGGLEE (455 aa)) are Extracellular-facing. Residue asparagine 86 is glycosylated (N-linked (GlcNAc...) (complex) asparagine). Chloride is bound by residues serine 106, valine 135, and cysteine 136. Cystine bridges form between cysteine 108/cysteine 136 and cysteine 213/cysteine 261. An N-linked (GlcNAc...) (high mannose) asparagine glycan is attached at asparagine 293. An N-linked (GlcNAc...) (complex) asparagine glycan is attached at asparagine 394. Residues 482 to 504 (SAVTGIVVGALLGAGLLMAFYFF) traverse the membrane as a helical segment. The Cytoplasmic portion of the chain corresponds to 505-541 (RKKYRITIERRTQQEESNLGKHRELREDSIRSHFSVA).

This sequence belongs to the ANF receptor family. In terms of assembly, homodimer; disulfide-linked. Dimers can also be formed through the C-terminal cysteine of isoform 2. Interacts with OSTN.

It localises to the cell membrane. Functionally, receptor for the natriuretic peptide hormones, binding with similar affinities atrial natriuretic peptide NPPA/ANP, brain natriuretic peptide NPPB/BNP, and C-type natriuretic peptide NPPC/CNP. May function as a clearance receptor for NPPA, NPPB and NPPC, regulating their local concentrations and effects. Acts as a regulator of osteoblast differentiation and bone growth by binding to its ligand osteocrin, thereby preventing binding between NPR3/NPR-C and natriuretic peptides, leading to increase cGMP production. The sequence is that of Atrial natriuretic peptide receptor 3 (NPR3) from Homo sapiens (Human).